A 115-amino-acid polypeptide reads, in one-letter code: Thiosulfate:glutathione sulfurtransferase (115 aa).

The Rhodanese domain occupies 17–115; sequence ASGRARLFDV…AYREWLEKES (99 aa). The active-site Cysteine persulfide intermediate is the Cys79.

In terms of tissue distribution, highly expressed in kidney, liver and skeletal muscle. Lower levels of expression in heart, colon, thymus, spleen, placenta and lung. Weakly expressed in brain, small intestine and peripheral blood leukocytes. Expressed at high levels in the breast carcinoma cell lines MCF-7 and MDA-MB-468 and at a lower level in the breast carcinoma cell line MDA-MB-231, the colon carcinoma call line LoVo and the lung carcinoma cell line A-549. No expression in the cell lines EFO-27 and HeLa, or the normal breast tissue cell lines MCF-10A and H184A1. Detected in invasive ductal carcinoma, but not in the adjacent tissues.

Its subcellular location is the cytoplasm. It is found in the perinuclear region. It carries out the reaction thiosulfate + glutathione = S-sulfanylglutathione + sulfite + H(+). It catalyses the reaction thiosulfate + 2 glutathione = glutathione disulfide + hydrogen sulfide + sulfite + 2 H(+). With respect to regulation, GSS(-) is a potent inhibitor of TSTD1, since the presence of the sulfur dioxygenase (SDO) strongly increases the TSTD1 catalytic activity. Thiosulfate:glutathione sulfurtransferase (TST) required to produce S-sulfanylglutathione (GSS(-)), a central intermediate in hydrogen sulfide metabolism. Provides the link between the first step in mammalian H(2)S metabolism performed by the sulfide:quinone oxidoreductase (SQOR) which catalyzes the conversion of H(2)S to thiosulfate, and the sulfur dioxygenase (SDO) which uses GSS(-) as substrate. The thermodynamic coupling of the irreversible SDO and reversible TST reactions provides a model for the physiologically relevant reaction with thiosulfate as the sulfane donor. GSS(-) spontaneously reacts with glutathione to form glutathione disulfide. This chain is Thiosulfate:glutathione sulfurtransferase (TSTD1), found in Homo sapiens (Human).